The primary structure comprises 204 residues: bMERB domain-containing protein 1 (204 aa).

One can recognise a bMERB domain in the interval 3 to 150; sequence LKQSLSTHLE…EQEEDKEMAD (148 aa). Positions 162–187 are disordered; it reads VTKSPASSRAEKKAEPPPSKPTVAKT.

The polypeptide is bMERB domain-containing protein 1 (Homo sapiens (Human)).